Here is a 59-residue protein sequence, read N- to C-terminus: uncharacterized protein (59 aa).

Positions 27-59 (SCFQNRPPEPASFQNLRPEPASLQNLRTEPTSF) are disordered. Positions 48–59 (SLQNLRTEPTSF) are enriched in polar residues.

This is an uncharacterized protein from Homo sapiens (Human).